The chain runs to 204 residues: Probable peptidyl-tRNA hydrolase (204 aa).

His-36 acts as the Proton acceptor in catalysis. TRNA-binding residues include Asn-86 and Asn-132.

This sequence belongs to the PTH family.

The catalysed reaction is an N-acyl-L-alpha-aminoacyl-tRNA + H2O = an N-acyl-L-amino acid + a tRNA + H(+). In terms of biological role, peptidyl-tRNA hydrolase that cleaves nascent chains-tRNAs that are not stably fixed in the P-site of 60S ribosome-nascent chain complexes. Acts downstream of the ribosome-associated quality control (RQC) pathway to release non-ubiquitinated nascent chains from 60S and 80S ribosome-nascent chain complexes. Does not act on ubiquitinated nascent chains, which are cleaved by ANKZF1 for degradation. This chain is Probable peptidyl-tRNA hydrolase, found in Mus musculus (Mouse).